Reading from the N-terminus, the 307-residue chain is Small ribosomal subunit biogenesis GTPase RsgA (307 aa).

In terms of domain architecture, CP-type G spans 82–240; it reads GRYGERIVVA…IADTPGLREV (159 aa). Residues 131-134 and 182-190 contribute to the GTP site; these read NKAD and GPSGVGKSS. Zn(2+)-binding residues include C264, C269, H271, and C277.

Belongs to the TRAFAC class YlqF/YawG GTPase family. RsgA subfamily. In terms of assembly, monomer. Associates with 30S ribosomal subunit, binds 16S rRNA. Requires Zn(2+) as cofactor.

The protein localises to the cytoplasm. In terms of biological role, one of several proteins that assist in the late maturation steps of the functional core of the 30S ribosomal subunit. Helps release RbfA from mature subunits. May play a role in the assembly of ribosomal proteins into the subunit. Circularly permuted GTPase that catalyzes slow GTP hydrolysis, GTPase activity is stimulated by the 30S ribosomal subunit. The protein is Small ribosomal subunit biogenesis GTPase RsgA of Gemmatimonas aurantiaca (strain DSM 14586 / JCM 11422 / NBRC 100505 / T-27).